A 289-amino-acid chain; its full sequence is ATP phosphoribosyltransferase (289 aa).

This sequence belongs to the ATP phosphoribosyltransferase family. Long subfamily. Mg(2+) serves as cofactor.

The protein localises to the cytoplasm. It catalyses the reaction 1-(5-phospho-beta-D-ribosyl)-ATP + diphosphate = 5-phospho-alpha-D-ribose 1-diphosphate + ATP. Its pathway is amino-acid biosynthesis; L-histidine biosynthesis; L-histidine from 5-phospho-alpha-D-ribose 1-diphosphate: step 1/9. Its activity is regulated as follows. Feedback inhibited by histidine. In terms of biological role, catalyzes the condensation of ATP and 5-phosphoribose 1-diphosphate to form N'-(5'-phosphoribosyl)-ATP (PR-ATP). Has a crucial role in the pathway because the rate of histidine biosynthesis seems to be controlled primarily by regulation of HisG enzymatic activity. This is ATP phosphoribosyltransferase from Methanosarcina acetivorans (strain ATCC 35395 / DSM 2834 / JCM 12185 / C2A).